The chain runs to 162 residues: NADH-quinone oxidoreductase subunit I 2 (162 aa).

4Fe-4S ferredoxin-type domains lie at 52-82 (LRRYPNGEERCIACKLCEAVCPAQAITIEAG) and 93-122 (ERYDIDMVKCIYCGLCQEACPVDAIVEGPN). [4Fe-4S] cluster is bound by residues cysteine 62, cysteine 65, cysteine 68, cysteine 72, cysteine 102, cysteine 105, cysteine 108, and cysteine 112.

The protein belongs to the complex I 23 kDa subunit family. NDH-1 is composed of 14 different subunits. Subunits NuoA, H, J, K, L, M, N constitute the membrane sector of the complex. The cofactor is [4Fe-4S] cluster.

The protein localises to the cell inner membrane. The enzyme catalyses a quinone + NADH + 5 H(+)(in) = a quinol + NAD(+) + 4 H(+)(out). Functionally, NDH-1 shuttles electrons from NADH, via FMN and iron-sulfur (Fe-S) centers, to quinones in the respiratory chain. The immediate electron acceptor for the enzyme in this species is believed to be ubiquinone. Couples the redox reaction to proton translocation (for every two electrons transferred, four hydrogen ions are translocated across the cytoplasmic membrane), and thus conserves the redox energy in a proton gradient. The sequence is that of NADH-quinone oxidoreductase subunit I 2 from Rhodopseudomonas palustris (strain BisA53).